A 288-amino-acid polypeptide reads, in one-letter code: Phosphatidylglycerol--prolipoprotein diacylglyceryl transferase (288 aa).

4 consecutive transmembrane segments (helical) span residues 8 to 28 (IGPI…FVGI), 49 to 69 (AFVA…LFNL), 79 to 99 (ILAV…GIAG), and 109 to 129 (INPL…QAIG). A 1,2-diacyl-sn-glycero-3-phospho-(1'-sn-glycerol) is bound at residue R130. Helical transmembrane passes span 203–223 (PAML…WFIL), 232–252 (GYMW…VSFF), and 259–279 (FFNF…SIFF).

It belongs to the Lgt family.

It is found in the cell inner membrane. The catalysed reaction is L-cysteinyl-[prolipoprotein] + a 1,2-diacyl-sn-glycero-3-phospho-(1'-sn-glycerol) = an S-1,2-diacyl-sn-glyceryl-L-cysteinyl-[prolipoprotein] + sn-glycerol 1-phosphate + H(+). It functions in the pathway protein modification; lipoprotein biosynthesis (diacylglyceryl transfer). In terms of biological role, catalyzes the transfer of the diacylglyceryl group from phosphatidylglycerol to the sulfhydryl group of the N-terminal cysteine of a prolipoprotein, the first step in the formation of mature lipoproteins. This chain is Phosphatidylglycerol--prolipoprotein diacylglyceryl transferase, found in Fusobacterium nucleatum subsp. nucleatum (strain ATCC 25586 / DSM 15643 / BCRC 10681 / CIP 101130 / JCM 8532 / KCTC 2640 / LMG 13131 / VPI 4355).